A 349-amino-acid polypeptide reads, in one-letter code: uncharacterized protein (349 aa).

S2 carries the post-translational modification Phosphoserine.

This is an uncharacterized protein from Saccharomyces cerevisiae (strain ATCC 204508 / S288c) (Baker's yeast).